Consider the following 469-residue polypeptide: Serine hydroxymethyltransferase, cytosolic (469 aa).

Lys248 is subject to N6-(pyridoxal phosphate)lysine.

It belongs to the SHMT family. In terms of assembly, homotetramer. Requires pyridoxal 5'-phosphate as cofactor.

The protein localises to the cytoplasm. It carries out the reaction (6R)-5,10-methylene-5,6,7,8-tetrahydrofolate + glycine + H2O = (6S)-5,6,7,8-tetrahydrofolate + L-serine. The protein operates within one-carbon metabolism; tetrahydrofolate interconversion. Interconversion of serine and glycine. The protein is Serine hydroxymethyltransferase, cytosolic (SHM2) of Eremothecium gossypii (strain ATCC 10895 / CBS 109.51 / FGSC 9923 / NRRL Y-1056) (Yeast).